The sequence spans 267 residues: MEMO1 family protein aq_890 (267 aa).

Belongs to the MEMO1 family.

In Aquifex aeolicus (strain VF5), this protein is MEMO1 family protein aq_890.